Here is a 1748-residue protein sequence, read N- to C-terminus: Tight junction protein 1 (1748 aa).

The PDZ 1 domain occupies Thr-23–Lys-110. Positions Ala-102–Val-112 are enriched in basic residues. The segment at Ala-102–Leu-189 is disordered. Acidic residues predominate over residues Pro-123–Ile-136. Ser-125 is modified (phosphoserine). Position 132 is a phosphotyrosine (Tyr-132). Residues Arg-149 to Ser-175 are compositionally biased toward basic and acidic residues. Residues Ser-175, Ser-178, and Ser-179 each carry the phosphoserine modification. Residue Thr-185 is modified to Phosphothreonine. The region spanning Lys-186–Glu-264 is the PDZ 2 domain. Ser-212 and Ser-241 each carry phosphoserine. Thr-267 bears the Phosphothreonine mark. Ser-275, Ser-277, Ser-280, Ser-284, Ser-290, Ser-294, Ser-297, Ser-300, Ser-323, Ser-329, Ser-334, Ser-337, and Ser-353 each carry phosphoserine. Residues Leu-295–Asp-396 are disordered. Residues His-299–Arg-327 show a composition bias toward basic and acidic residues. Polar residues predominate over residues Ser-329 to Leu-338. Position 354 is a phosphothreonine (Thr-354). Over residues Lys-357–Lys-377 the composition is skewed to basic and acidic residues. The region spanning Ser-421–Lys-502 is the PDZ 3 domain. The SH3 domain occupies Gly-516 to Ala-584. The region spanning Arg-598–Asn-779 is the Guanylate kinase-like domain. Phosphoserine occurs at positions 617 and 622. The segment at Tyr-633–Arg-876 is occludin (OCLN)-binding region. A Phosphothreonine modification is found at Thr-809. A phosphoserine mark is found at Ser-810 and Ser-821. Phosphotyrosine is present on Tyr-822. 3 positions are modified to phosphoserine: Ser-824, Ser-828, and Ser-837. Disordered regions lie at residues Ala-825 to Glu-1081 and Asp-1095 to Asp-1587. 5 positions are modified to phosphothreonine: Thr-846, Thr-848, Thr-854, Thr-861, and Thr-868. The segment covering Glu-879–Asn-892 has biased composition (basic and acidic residues). Positions Gln-893–Pro-906 are enriched in low complexity. A Phosphoserine modification is found at Ser-912. Composition is skewed to polar residues over residues Pro-934 to Asn-953 and Pro-963 to Thr-979. The residue at position 968 (Ser-968) is a Phosphoserine. The span at Asp-998–Arg-1014 shows a compositional bias: basic and acidic residues. Over residues Tyr-1061 to Arg-1072 the composition is skewed to polar residues. Phosphoserine is present on residues Ser-1071, Ser-1111, and Ser-1139. Basic and acidic residues predominate over residues His-1110–Glu-1125. Phosphotyrosine occurs at positions 1140 and 1165. The interval Arg-1151 to Pro-1371 is actin-binding region (ABR). 2 stretches are compositionally biased toward basic and acidic residues: residues Lys-1269–Asn-1286 and Pro-1336–Asp-1347. Phosphotyrosine is present on Tyr-1354. Position 1366 is a phosphoserine (Ser-1366). The segment covering Ser-1389 to Ser-1400 has biased composition (low complexity). Basic and acidic residues predominate over residues Lys-1403–Glu-1420. Position 1413 is a phosphoserine (Ser-1413). Composition is skewed to polar residues over residues Asn-1459 to Val-1470 and Gly-1512 to Pro-1522. The span at Pro-1538 to Lys-1547 shows a compositional bias: basic and acidic residues. Residues Ser-1545 and Ser-1617 each carry the phosphoserine modification. Residues Ala-1634–Phe-1748 enclose the ZU5 domain.

Belongs to the MAGUK family. Homodimer. Forms heterodimers TJP3. Forms a heterodimer (via PDZ2 domain) with TJP2/ZO2 (via PDZ2 domain). Interacts with OCLN, CALM, claudins, CGN/cingulin, CXADR, GJA12, GJD3 and UBN1. Interacts (via ZU5 domain) with CDC42BPB and MYZAP. Interacts (via PDZ domain) with GJA1. Interacts (via PDZ domains) with ANKRD2. Interacts with POPDC1 (via the C-terminus cytoplasmic tail). Interacts with HSPA4 and KIRREL1. Interacts with DLL1. Interacts with USP53 (via the C-terminal region). Interacts (via ABR region) with F-actin. Interacts with DNMBP (via C-terminal domain); required for the apical cell-cell junction localization of DNMBP. Interacts with SPEF1. Interacts (via N-terminus) with CTNNA1. Interacts with CLDN18. Interacts with CLDN16 (via TRV motif); this is a prerequisite for anchoring of CLDN16 at the tight junction. Interacts with PKP1; the interaction facilitates TJP1/ZO-1 localization to the plasma membrane. Interacts with PATJ (via PDZ1-6 domains); the interaction is required for attachment and extension of TJP1/ZO1 condensates along the apical cell interface. In terms of processing, phosphorylated at tyrosine redidues in response to epidermal growth factor (EGF). This response is dependent on an intact actin microfilament system. Dephosphorylated by PTPRJ. In terms of tissue distribution, the alpha-containing isoform is found in most epithelial cell junctions. The short isoform is found both in endothelial cells and the highly specialized epithelial junctions of renal glomeruli and Sertoli cells of the seminiferous tubules.

It is found in the cell membrane. It localises to the cell junction. Its subcellular location is the tight junction. The protein localises to the gap junction. The protein resides in the cell projection. It is found in the podosome. In terms of biological role, TJP1, TJP2, and TJP3 are closely related scaffolding proteins that link tight junction (TJ) transmembrane proteins such as claudins, junctional adhesion molecules, and occludin to the actin cytoskeleton. Forms a multistranded TJP1/ZO1 condensate which elongates to form a tight junction belt, the belt is anchored at the apical cell membrane via interaction with PATJ. The tight junction acts to limit movement of substances through the paracellular space and as a boundary between the compositionally distinct apical and basolateral plasma membrane domains of epithelial and endothelial cells. Necessary for lumenogenesis, and particularly efficient epithelial polarization and barrier formation. Plays a role in the regulation of cell migration by targeting CDC42BPB to the leading edge of migrating cells. Plays an important role in podosome formation and associated function, thus regulating cell adhesion and matrix remodeling. With TJP2 and TJP3, participates in the junctional retention and stability of the transcription factor DBPA, but is not involved in its shuttling to the nucleus. May play a role in mediating cell morphology changes during ameloblast differentiation via its role in tight junctions. The polypeptide is Tight junction protein 1 (Homo sapiens (Human)).